The following is a 660-amino-acid chain: Bifunctional polymyxin resistance protein ArnA (660 aa).

Residues 1 to 304 (MKTVVFAYHD…TLGLVQGSRL (304 aa)) are formyltransferase ArnAFT. 86–88 (HLI) lines the (6R)-10-formyltetrahydrofolate pocket. The active-site Proton donor; for formyltransferase activity is the His-104. Residues Arg-114 and 136–140 (VKRAD) each bind (6R)-10-formyltetrahydrofolate. The tract at residues 314–660 (RRTRVLILGV…RTVDLTDKPS (347 aa)) is dehydrogenase ArnADH. NAD(+) contacts are provided by residues Asp-347 and 368–369 (DI). UDP-alpha-D-glucuronate is bound by residues Ala-393, Tyr-398, and 432-433 (TS). The Proton acceptor; for decarboxylase activity role is filled by Glu-434. Residues Arg-460, Asn-492, 526 to 535 (KLIDGGKQKR), and Tyr-613 each bind UDP-alpha-D-glucuronate. Residue Arg-619 is the Proton donor; for decarboxylase activity of the active site.

The protein in the N-terminal section; belongs to the Fmt family. UDP-L-Ara4N formyltransferase subfamily. It in the C-terminal section; belongs to the NAD(P)-dependent epimerase/dehydratase family. UDP-glucuronic acid decarboxylase subfamily. As to quaternary structure, homohexamer, formed by a dimer of trimers.

The enzyme catalyses UDP-alpha-D-glucuronate + NAD(+) = UDP-beta-L-threo-pentopyranos-4-ulose + CO2 + NADH. It catalyses the reaction UDP-4-amino-4-deoxy-beta-L-arabinose + (6R)-10-formyltetrahydrofolate = UDP-4-deoxy-4-formamido-beta-L-arabinose + (6S)-5,6,7,8-tetrahydrofolate + H(+). It participates in nucleotide-sugar biosynthesis; UDP-4-deoxy-4-formamido-beta-L-arabinose biosynthesis; UDP-4-deoxy-4-formamido-beta-L-arabinose from UDP-alpha-D-glucuronate: step 1/3. Its pathway is nucleotide-sugar biosynthesis; UDP-4-deoxy-4-formamido-beta-L-arabinose biosynthesis; UDP-4-deoxy-4-formamido-beta-L-arabinose from UDP-alpha-D-glucuronate: step 3/3. It functions in the pathway bacterial outer membrane biogenesis; lipopolysaccharide biosynthesis. In terms of biological role, bifunctional enzyme that catalyzes the oxidative decarboxylation of UDP-glucuronic acid (UDP-GlcUA) to UDP-4-keto-arabinose (UDP-Ara4O) and the addition of a formyl group to UDP-4-amino-4-deoxy-L-arabinose (UDP-L-Ara4N) to form UDP-L-4-formamido-arabinose (UDP-L-Ara4FN). The modified arabinose is attached to lipid A and is required for resistance to polymyxin and cationic antimicrobial peptides. The sequence is that of Bifunctional polymyxin resistance protein ArnA from Escherichia coli O1:K1 / APEC.